A 566-amino-acid polypeptide reads, in one-letter code: Acyl-CoA synthetase ALT10 (566 aa).

Met-196 to Lys-207 contacts AMP. The tract at residues Glu-473–Lys-551 is AMP-binding.

The protein belongs to the ATP-dependent AMP-binding enzyme family.

Its pathway is mycotoxin biosynthesis. Its function is as follows. Acyl-CoA synthetase; part of the gene cluster that mediates the biosynthesis of the host-selective toxins (HSTs) AAL-toxins, sphinganine-analog mycotoxins responsible for Alternaria stem canker on tomato by the tomato pathotype. The biosynthesis starts with the polyketide synthase ALT1-catalyzed C-16 carbon chain assembly from one starter acetyl-CoA unit with malonyl-CoA extender units. ALT1 also selectively transfers methyl groups at the first and the third cycle of chain elongation for AAL toxin. The C-16 polyketide chain is released from the enzyme by a nucleophilic attack of a carbanion, which is derived from R-carbon of glycin by decarboxylation, on the carbonyl carbon of polyketide acyl chain. This step is probably catalyzed by a pyridoxal 5'-phosphate-dependent aminoacyl transferase ALT4. The respective functions of the other enzymes encoded by the cluster have still to be elucidated. The sphingosine N-acyltransferase-like protein ALT7 seems not to act as a resistance/self-tolerance factor against the toxin in the toxin biosynthetic gene cluster, contrary to what is expected. The sequence is that of Acyl-CoA synthetase ALT10 from Alternaria alternata (Alternaria rot fungus).